The chain runs to 356 residues: Protein-arginine kinase (356 aa).

The Phosphagen kinase C-terminal domain occupies 22-249; sequence FRPISTLSLS…SKILSAETEA (228 aa). ATP contacts are provided by residues 25-29, 172-176, and 202-207; these read ISTLS, VARAF, and SSLLPL.

This sequence belongs to the ATP:guanido phosphotransferase family.

The catalysed reaction is L-arginyl-[protein] + ATP = N(omega)-phospho-L-arginyl-[protein] + ADP + H(+). Its function is as follows. Catalyzes the specific phosphorylation of arginine residues in proteins. The chain is Protein-arginine kinase from Chlamydia muridarum (strain MoPn / Nigg).